A 918-amino-acid chain; its full sequence is Probable UDP-N-acetylglucosamine--peptide N-acetylglucosaminyltransferase SPINDLY (918 aa).

TPR repeat units lie at residues 34 to 66 (GKEA…SKNV), 67 to 99 (EAHI…DPHN), 101 to 132 (CALT…DPSY), 140 to 171 (ATVL…DPHY), 172 to 205 (APAC…SPTY), 207 to 238 (DAYC…NNMG), 239 to 271 (IALT…NWHY), 273 to 305 (DAMY…NPHC), 306 to 339 (AEAC…KPNF), 341 to 373 (QSLN…NPTY), and 374 to 407 (AEAY…DPDS). A catalytic region region spans residues 408–918 (RNAGQNRLLA…LNCGDQCFRV (511 aa)). Over residues 843 to 853 (QLHQQPNTSPQ) the composition is skewed to polar residues. The disordered stretch occupies residues 843–877 (QLHQQPNTSPQKLVKDEPADDASGPEHGPASKDNP).

It belongs to the glycosyltransferase 41 family. O-GlcNAc transferase subfamily.

The protein localises to the nucleus. It catalyses the reaction L-seryl-[protein] + UDP-N-acetyl-alpha-D-glucosamine = 3-O-(N-acetyl-beta-D-glucosaminyl)-L-seryl-[protein] + UDP + H(+). The enzyme catalyses L-threonyl-[protein] + UDP-N-acetyl-alpha-D-glucosamine = 3-O-(N-acetyl-beta-D-glucosaminyl)-L-threonyl-[protein] + UDP + H(+). It participates in protein modification; protein glycosylation. Functionally, probable O-linked N-acetylglucosamine transferase (OGT) involved in various processes such as gibberellin (GA) signaling pathway. OGTs catalyze the addition of nucleotide-activated sugars directly onto the polypeptide through O-glycosidic linkage with the hydroxyl of serine or threonine. Probably acts by adding O-linked sugars to yet unknown proteins. May function as a negative regulator of GA signal transduction during vernalization, inhibiting adventitious shoot elongation during vernalization. In Eustoma exaltatum subsp. russellianum (Bluebells), this protein is Probable UDP-N-acetylglucosamine--peptide N-acetylglucosaminyltransferase SPINDLY (SPY).